Reading from the N-terminus, the 772-residue chain is Cadherin-19 (772 aa).

An N-terminal signal peptide occupies residues 1–21 (MNCYLLLRFMLGIPLLWPCLG). Positions 22-43 (ATENSQTKKVKQPVRSHLRVKR) are excised as a propeptide. Cadherin domains lie at 44-148 (GWVW…EPKF), 149-256 (LDEP…KPIF), 257-370 (KESL…PPLF), 371-470 (LLPY…APEF), and 470-581 (FSQY…STQT). The Extracellular segment spans residues 44–596 (GWVWNQFFVP…LVLSMGFKTE (553 aa)). Asn57 and Asn74 each carry an N-linked (GlcNAc...) asparagine glycan. N-linked (GlcNAc...) asparagine glycosylation is found at Asn419, Asn437, Asn508, Asn515, Asn516, and Asn534. A helical membrane pass occupies residues 597-617 (VIIAILICIMIIFGFIFLTLG). At 618–772 (LKQRRKQILF…MFGSAVQSNN (155 aa)) the chain is on the cytoplasmic side.

In terms of tissue distribution, expressed in many tissues, with the exception of uterus.

Its subcellular location is the cell membrane. Functionally, cadherins are calcium-dependent cell adhesion proteins. They preferentially interact with themselves in a homophilic manner in connecting cells; cadherins may thus contribute to the sorting of heterogeneous cell types. The protein is Cadherin-19 (CDH19) of Homo sapiens (Human).